We begin with the raw amino-acid sequence, 277 residues long: Mitochondrial outer membrane protein porin 5 (277 aa).

The protein belongs to the eukaryotic mitochondrial porin (TC 1.B.8.1) family.

The protein resides in the mitochondrion outer membrane. In terms of biological role, forms a channel through the mitochondrial outer membrane that allows diffusion of small hydrophilic molecules. The channel adopts an open conformation at low or zero membrane potential and a closed conformation at potentials above 30-40 mV. The open state has a weak anion selectivity whereas the closed state is cation-selective. The protein is Mitochondrial outer membrane protein porin 5 (VDAC5) of Oryza sativa subsp. japonica (Rice).